The sequence spans 296 residues: Porphobilinogen deaminase (296 aa).

At C232 the chain carries S-(dipyrrolylmethanemethyl)cysteine.

The protein belongs to the HMBS family. In terms of assembly, monomer. Dipyrromethane serves as cofactor.

The enzyme catalyses 4 porphobilinogen + H2O = hydroxymethylbilane + 4 NH4(+). Its pathway is porphyrin-containing compound metabolism; protoporphyrin-IX biosynthesis; coproporphyrinogen-III from 5-aminolevulinate: step 2/4. In terms of biological role, tetrapolymerization of the monopyrrole PBG into the hydroxymethylbilane pre-uroporphyrinogen in several discrete steps. The protein is Porphobilinogen deaminase of Corynebacterium aurimucosum (strain ATCC 700975 / DSM 44827 / CIP 107346 / CN-1) (Corynebacterium nigricans).